Consider the following 785-residue polypeptide: Probable splicing factor 3A subunit 1 (785 aa).

M1 bears the N-acetylmethionine mark. Positions 1 to 42 (MFSSMQILPLEAPPTDGKLGPLPPSQLTDQEVEERELQAEQN) are disordered. An SURP motif 1 repeat occupies 71–113 (IVEKTAQFVSKNGLEFEKRIIVSNEKNAKFNFLKSSDPYHAFY). Residues 124–175 (NKDGAQGTDDSDGTTDPQLDTGAADESEAGDTQPDLQAQFRIPSKPLEAPEP) are disordered. The stretch at 193-235 (IIKLTAQFVARNGKSFLTGLSNRENNNPQFHFMKPTHSMFTFF) is one SURP motif 2 repeat. 2 disordered regions span residues 522–554 (NANG…GVPI) and 639–713 (RPYG…PNEN). Composition is skewed to pro residues over residues 543 to 554 (AALPPPRPGVPI) and 653 to 674 (QPPP…PPLP). Residues 677–686 (PEAKRQKFDE) show a composition bias toward basic and acidic residues. In terms of domain architecture, Ubiquitin-like spans 707–782 (VSKPNENDGQ…LTLSLRERGG (76 aa)).

In terms of assembly, component of splicing factor SF3A which is composed of three subunits.

It is found in the nucleus. The chain is Probable splicing factor 3A subunit 1 from Arabidopsis thaliana (Mouse-ear cress).